The chain runs to 221 residues: Crossover junction endodeoxyribonuclease RuvC (221 aa).

Catalysis depends on residues D12, E73, and D146. Mg(2+)-binding residues include D12, E73, and D146. The segment at 169-221 (SQYSEQELEKRRRVQQGKLGKAKSTYNAEQAQSHASDPAKAAHPSQFQRTDTN) is disordered. Over residues 192 to 203 (STYNAEQAQSHA) the composition is skewed to polar residues.

The protein belongs to the RuvC family. In terms of assembly, homodimer which binds Holliday junction (HJ) DNA. The HJ becomes 2-fold symmetrical on binding to RuvC with unstacked arms; it has a different conformation from HJ DNA in complex with RuvA. In the full resolvosome a probable DNA-RuvA(4)-RuvB(12)-RuvC(2) complex forms which resolves the HJ. Requires Mg(2+) as cofactor.

It is found in the cytoplasm. It catalyses the reaction Endonucleolytic cleavage at a junction such as a reciprocal single-stranded crossover between two homologous DNA duplexes (Holliday junction).. Its function is as follows. The RuvA-RuvB-RuvC complex processes Holliday junction (HJ) DNA during genetic recombination and DNA repair. Endonuclease that resolves HJ intermediates. Cleaves cruciform DNA by making single-stranded nicks across the HJ at symmetrical positions within the homologous arms, yielding a 5'-phosphate and a 3'-hydroxyl group; requires a central core of homology in the junction. The consensus cleavage sequence is 5'-(A/T)TT(C/G)-3'. Cleavage occurs on the 3'-side of the TT dinucleotide at the point of strand exchange. HJ branch migration catalyzed by RuvA-RuvB allows RuvC to scan DNA until it finds its consensus sequence, where it cleaves and resolves the cruciform DNA. The protein is Crossover junction endodeoxyribonuclease RuvC of Corynebacterium glutamicum (strain ATCC 13032 / DSM 20300 / JCM 1318 / BCRC 11384 / CCUG 27702 / LMG 3730 / NBRC 12168 / NCIMB 10025 / NRRL B-2784 / 534).